Reading from the N-terminus, the 103-residue chain is Histone H4 (103 aa).

Positions 1–14 are enriched in gly residues; it reads MSGRGKGGKGLGKG. The disordered stretch occupies residues 1 to 20; that stretch reads MSGRGKGGKGLGKGGAKRHR. A DNA-binding region spans residues 17 to 21; the sequence is KRHRK.

This sequence belongs to the histone H4 family. In terms of assembly, the nucleosome is a histone octamer containing two molecules each of H2A, H2B, H3 and H4 assembled in one H3-H4 heterotetramer and two H2A-H2B heterodimers. The octamer wraps approximately 147 bp of DNA.

Its subcellular location is the nucleus. It is found in the chromosome. Functionally, core component of nucleosome. Nucleosomes wrap and compact DNA into chromatin, limiting DNA accessibility to the cellular machineries which require DNA as a template. Histones thereby play a central role in transcription regulation, DNA repair, DNA replication and chromosomal stability. DNA accessibility is regulated via a complex set of post-translational modifications of histones, also called histone code, and nucleosome remodeling. The sequence is that of Histone H4 (H41) from Physarum polycephalum (Slime mold).